We begin with the raw amino-acid sequence, 178 residues long: ATP synthase subunit delta (178 aa).

It belongs to the ATPase delta chain family. In terms of assembly, F-type ATPases have 2 components, F(1) - the catalytic core - and F(0) - the membrane proton channel. F(1) has five subunits: alpha(3), beta(3), gamma(1), delta(1), epsilon(1). F(0) has three main subunits: a(1), b(2) and c(10-14). The alpha and beta chains form an alternating ring which encloses part of the gamma chain. F(1) is attached to F(0) by a central stalk formed by the gamma and epsilon chains, while a peripheral stalk is formed by the delta and b chains.

The protein resides in the cell inner membrane. Functionally, f(1)F(0) ATP synthase produces ATP from ADP in the presence of a proton or sodium gradient. F-type ATPases consist of two structural domains, F(1) containing the extramembraneous catalytic core and F(0) containing the membrane proton channel, linked together by a central stalk and a peripheral stalk. During catalysis, ATP synthesis in the catalytic domain of F(1) is coupled via a rotary mechanism of the central stalk subunits to proton translocation. This protein is part of the stalk that links CF(0) to CF(1). It either transmits conformational changes from CF(0) to CF(1) or is implicated in proton conduction. This chain is ATP synthase subunit delta, found in Dechloromonas aromatica (strain RCB).